The primary structure comprises 76 residues: UPF0291 protein BA_1897/GBAA_1897/BAS1759 (76 aa).

This sequence belongs to the UPF0291 family.

Its subcellular location is the cytoplasm. In Bacillus anthracis, this protein is UPF0291 protein BA_1897/GBAA_1897/BAS1759.